The sequence spans 118 residues: Large ribosomal subunit protein bL19 (118 aa).

Belongs to the bacterial ribosomal protein bL19 family.

In terms of biological role, this protein is located at the 30S-50S ribosomal subunit interface and may play a role in the structure and function of the aminoacyl-tRNA binding site. The sequence is that of Large ribosomal subunit protein bL19 from Hahella chejuensis (strain KCTC 2396).